We begin with the raw amino-acid sequence, 113 residues long: Putative pterin-4-alpha-carbinolamine dehydratase (113 aa).

Belongs to the pterin-4-alpha-carbinolamine dehydratase family.

It catalyses the reaction (4aS,6R)-4a-hydroxy-L-erythro-5,6,7,8-tetrahydrobiopterin = (6R)-L-erythro-6,7-dihydrobiopterin + H2O. This chain is Putative pterin-4-alpha-carbinolamine dehydratase, found in Saccharophagus degradans (strain 2-40 / ATCC 43961 / DSM 17024).